A 471-amino-acid polypeptide reads, in one-letter code: Adenosylhomocysteinase (471 aa).

Positions 60, 135, and 196 each coordinate substrate. 197-199 (TTT) contributes to the NAD(+) binding site. Residues Lys226 and Asp230 each contribute to the substrate site. NAD(+) is bound by residues Asn231, 260–265 (GYGDVG), Glu283, Asn318, 339–341 (IGH), and Asn387.

Belongs to the adenosylhomocysteinase family. The cofactor is NAD(+).

The protein localises to the cytoplasm. It catalyses the reaction S-adenosyl-L-homocysteine + H2O = L-homocysteine + adenosine. Its pathway is amino-acid biosynthesis; L-homocysteine biosynthesis; L-homocysteine from S-adenosyl-L-homocysteine: step 1/1. Its function is as follows. May play a key role in the regulation of the intracellular concentration of adenosylhomocysteine. The sequence is that of Adenosylhomocysteinase from Chlorobaculum parvum (strain DSM 263 / NCIMB 8327) (Chlorobium vibrioforme subsp. thiosulfatophilum).